The chain runs to 145 residues: Large ribosomal subunit protein uL15 (145 aa).

The tract at residues 1-58 is disordered; the sequence is MFNLLKPKGASKRRKIVGRGPGSGLGKTSGRGQKGQKARNTSPRLGFEGGQTPLYRRL. A compositionally biased stretch (gly residues) spans 19–33; it reads RGPGSGLGKTSGRGQ.

The protein belongs to the universal ribosomal protein uL15 family. In terms of assembly, part of the 50S ribosomal subunit.

In terms of biological role, binds to the 23S rRNA. This is Large ribosomal subunit protein uL15 from Borrelia garinii subsp. bavariensis (strain ATCC BAA-2496 / DSM 23469 / PBi) (Borreliella bavariensis).